Reading from the N-terminus, the 1342-residue chain is Subtilisin-like protease 2 (1342 aa).

Positions 1-18 (MLNIIYVVSLILIKFIFY) are cleaved as a signal peptide. A propeptide spans 19–687 (KECNNNNNYY…KLYNNKYSFL (669 aa)) (inhibition peptide). Disordered regions lie at residues 85–111 (EKKT…ENEI) and 143–171 (ADVS…NYKN). N-linked (GlcNAc...) asparagine glycans are attached at residues Asn165, Asn343, Asn451, Asn455, and Asn493. Positions 415 to 474 (KKSKKEKENTQQKGGNNPNVDINILNNNNNNNNNNNNNSNNNSNSMNDEEINYNNNNNKE) are disordered. The segment covering 430 to 474 (NNPNVDINILNNNNNNNNNNNNNSNNNSNSMNDEEINYNNNNNKE) has biased composition (low complexity). The segment at 500 to 531 (IYHNKNDNSYKNKKEGTGKNNDNNDPNNNNNK) is disordered. Positions 503-516 (NKNDNSYKNKKEGT) are enriched in basic and acidic residues. Residues 518-531 (KNNDNNDPNNNNNK) are compositionally biased toward low complexity. N-linked (GlcNAc...) asparagine glycans are attached at residues Asn551, Asn642, and Asn729. The Extracellular portion of the chain corresponds to 688-1137 (NKFLNIEPLI…LYNLYEYDSH (450 aa)). One can recognise a Peptidase S8 domain in the interval 727–1020 (TWNLSIIRVF…DSLVNAEGAV (294 aa)). Catalysis depends on charge relay system residues Asp755 and His798. N-linked (GlcNAc...) asparagine glycosylation is found at Asn821, Asn857, Asn893, and Asn951. Ser961 serves as the catalytic Charge relay system. Asn1010 and Asn1106 each carry an N-linked (GlcNAc...) asparagine glycan. A helical transmembrane segment spans residues 1138–1158 (YLLASVILFFLALLSIFVGMI). Over 1159-1342 (YMKSRKHSDK…MNQLDDMFMK (184 aa)) the chain is Cytoplasmic.

This sequence belongs to the peptidase S8 family. Post-translationally, proteolytically cleaved at the N-terminus to generate a 74kDa intermediate which is further processed into a 72kDa form. The first maturation cleavage is autocatalytic, occurs in the ER and is necessary for the subsequent SUB2 trafficking to the microneme. The second cleavage may be mediated by PMX/plasmepsin X.

It localises to the cell membrane. The protein localises to the cytoplasmic vesicle. The protein resides in the secretory vesicle. Its subcellular location is the microneme membrane. It catalyses the reaction Hydrolysis of proteins with broad specificity for peptide bonds, and a preference for a large uncharged residue in P1. Hydrolyzes peptide amides.. Its activity is regulated as follows. Activation may be calcium-dependent. Inhibited by the non-covalent interaction with the cleaved propeptide. Functionally, serine protease which plays an essential role in the shedding of AMA1, MSP1 and MSP7 from the surface of the invading merozoite; this step is essential for productive invasion and the release of the adhesion between the erythrocyte and the merozoite. May cleave TRAMP/PTTRAMP, thereby shedding TRAMP from the merozoite surface during erythrocyte invasion. This Plasmodium falciparum protein is Subtilisin-like protease 2.